The following is a 1103-amino-acid chain: Centrosomal protein of 126 kDa (1103 aa).

Residues methionine 1–glycine 12 show a composition bias toward low complexity. A disordered region spans residues methionine 1–alanine 36. Coiled-coil stretches lie at residues histidine 43–alanine 116 and glutamine 182–glutamate 222. Disordered stretches follow at residues asparagine 380–threonine 409 and glutamate 723–serine 812. Over residues glutamate 723–threonine 735 the composition is skewed to basic and acidic residues. Positions glutamine 736–arginine 748 are enriched in basic residues. Polar residues-rich tracts occupy residues arginine 763–glycine 784 and asparagine 798–serine 812.

Interacts with DCTN1.

It localises to the midbody. It is found in the cytoplasm. The protein localises to the cytoskeleton. Its subcellular location is the microtubule organizing center. The protein resides in the centrosome. It localises to the cilium basal body. Its function is as follows. Participate in cytokinesis. Necessary for microtubules and mitotic spindle organization. Involved in primary cilium formation. This Mus musculus (Mouse) protein is Centrosomal protein of 126 kDa.